The sequence spans 360 residues: G-box-binding factor 2 (360 aa).

Over residues 1-16 (MGSNEEGNPTNNSDKP) the composition is skewed to polar residues. Disordered regions lie at residues 1 to 26 (MGSN…EQSN) and 150 to 275 (KVGS…AETE). Positions 164–184 (SQSSENDGSSNGSDGNTTGGE) are enriched in low complexity. The segment covering 198 to 208 (TGERPSSQNSL) has biased composition (polar residues). Residues 246–264 (NEKEVKREKRKQSNRESAR) are compositionally biased toward basic and acidic residues. The region spanning 249–312 (EVKREKRKQS…EKLRLENEAI (64 aa)) is the bZIP domain. A basic motif region spans residues 251-270 (KREKRKQSNRESARRSRLRK). Residues 277–312 (LSVKVDALVAENMSLRSKLGQLNNESEKLRLENEAI) form a leucine-zipper region. Polar residues predominate over residues 335 to 352 (NSVSGSKTVQHQLLNASP). The disordered stretch occupies residues 335-360 (NSVSGSKTVQHQLLNASPITDPVAAS).

This sequence belongs to the bZIP family. DNA-binding heterodimer. Interacts with GBF4. Interacts with BZIP16 and BZIP68. As to expression, found in both light and dark grown leaves.

It localises to the nucleus. Its function is as follows. Binds to the G-box motif (5'-CCACGTGG-3') of the rbcS-1A gene promoter. G-box and G-box-like motifs are cis-acting elements defined in promoters of certain plant genes which are regulated by such diverse stimuli as light-induction or hormone control. GBF2 is found to bind asymmetrically to the G-box. The polypeptide is G-box-binding factor 2 (GBF2) (Arabidopsis thaliana (Mouse-ear cress)).